Reading from the N-terminus, the 431-residue chain is Keratin, type I cytoskeletal 20 (431 aa).

The interval 1-23 (MDFSRQSFHRSLSSSSQGPALSM) is disordered. The tract at residues 1–76 (MDFSRQSFHR…SNGSDLFGGN (76 aa)) is head. Position 13 is a phosphoserine; by MAPKAPK2, MAPKAPK3 and PKC (Ser-13). Residues Ser-16 and Ser-26 each carry the phosphoserine modification. The coil 1A stretch occupies residues 77–112 (GKLAMQNLNDRLANYLEKVRSLEQSNSRLEAQIKQW). Residues 77–388 (GKLAMQNLND…RLLEGEDIKT (312 aa)) enclose the IF rod domain. The linker 1 stretch occupies residues 113–130 (YETNAPSTIRDYSSYYAQ). Residues 131-222 (IKELQNQVKD…KEHQEEVEVL (92 aa)) are coil 1B. The segment at 223–245 (RRQLGNNVNVEVDAAPGLNLGEI) is linker 12. Residues 246–384 (MNEMRQRYEV…ATYRRLLEGE (139 aa)) are coil 2. The tail stretch occupies residues 385 to 431 (DIKTTEYQLSTLEMKDIKKTRKIKTVVEEVVDGKVVSSEVKEIEESV).

It belongs to the intermediate filament family. As to quaternary structure, heterotetramer of two type I and two type II keratins. Associates with KRT8. Post-translationally, hyperphosphorylation at Ser-13 occurs during the early stages of apoptosis but becomes less prominent during the later stages. Phosphorylation at Ser-13 also increases in response to stress brought on by cell injury. In terms of processing, proteolytically cleaved by caspases during apoptosis. Cleavage occurs at Asp-235. In terms of tissue distribution, expressed at low levels in the more differentiated suprabasal regions of the small intestine, and at higher levels in the colon, mainly in the upper region and in scattered cells throughout the remaining epithelium. Also expressed in epithelial cells of bladder, ileum and stomach and at lower levels in pancreas and earskin. The phosphorylated form is nearly exclusively expressed in goblet cells of the small intestine and in the lumen-proximal cells of the colon (at protein level). Also expressed in jejunum and duodenum.

Functionally, plays a significant role in maintaining keratin filament organization in intestinal epithelia. When phosphorylated, plays a role in the secretion of mucin in the small intestine. The protein is Keratin, type I cytoskeletal 20 of Mus musculus (Mouse).